We begin with the raw amino-acid sequence, 252 residues long: uncharacterized protein (252 aa).

An N-terminal signal peptide occupies residues 1 to 25 (MRKKKFLSRFAFGSLFLLCGTILSA). A lipid anchor (N-palmitoyl cysteine) is attached at Cys-26. Cys-26 carries the S-diacylglycerol cysteine lipid modification.

Belongs to the MG439/MG440 family.

The protein resides in the cell membrane. This is an uncharacterized protein from Mycoplasma pneumoniae (strain ATCC 29342 / M129 / Subtype 1) (Mycoplasmoides pneumoniae).